A 144-amino-acid chain; its full sequence is 3-hydroxyacyl-[acyl-carrier-protein] dehydratase FabZ (144 aa).

His-48 is an active-site residue.

This sequence belongs to the thioester dehydratase family. FabZ subfamily.

It is found in the cytoplasm. The enzyme catalyses a (3R)-hydroxyacyl-[ACP] = a (2E)-enoyl-[ACP] + H2O. Functionally, involved in unsaturated fatty acids biosynthesis. Catalyzes the dehydration of short chain beta-hydroxyacyl-ACPs and long chain saturated and unsaturated beta-hydroxyacyl-ACPs. In Bacillus pumilus (strain SAFR-032), this protein is 3-hydroxyacyl-[acyl-carrier-protein] dehydratase FabZ.